The primary structure comprises 265 residues: MGQKIHPTGFRLAVSRNWASRWYASNTKFAGMLKEDIEVRDFLKKKLKNASVGRVVIERPARNARITIYSSRPGVVIGKKGEDIELLKAELQRRMGVPVHVNIEEIRKPETDAQLIADSITQQLERRIMFRRAMKRAMQNAMRLGAQGIKIMSAGRLNGIEIARTEWYREGRVPLHTLRADIDYGFSEAETTYGIIGVKVWVYKGDHLGRNDAPVVEEPQDDRRRRPGRPEGRRREGEGRPGGNRRGGAGAGRRAAPGADAKSGE.

Residues 39–107 enclose the KH type-2 domain; the sequence is VRDFLKKKLK…PVHVNIEEIR (69 aa). The disordered stretch occupies residues 211 to 265; the sequence is NDAPVVEEPQDDRRRRPGRPEGRRREGEGRPGGNRRGGAGAGRRAAPGADAKSGE. Positions 221–239 are enriched in basic and acidic residues; it reads DDRRRRPGRPEGRRREGEG. Residues 240 to 251 show a composition bias toward gly residues; sequence RPGGNRRGGAGA.

It belongs to the universal ribosomal protein uS3 family. Part of the 30S ribosomal subunit. Forms a tight complex with proteins S10 and S14.

Binds the lower part of the 30S subunit head. Binds mRNA in the 70S ribosome, positioning it for translation. In Cupriavidus necator (strain ATCC 17699 / DSM 428 / KCTC 22496 / NCIMB 10442 / H16 / Stanier 337) (Ralstonia eutropha), this protein is Small ribosomal subunit protein uS3.